Here is a 430-residue protein sequence, read N- to C-terminus: Histidine--tRNA ligase (430 aa).

It belongs to the class-II aminoacyl-tRNA synthetase family. In terms of assembly, homodimer.

Its subcellular location is the cytoplasm. The enzyme catalyses tRNA(His) + L-histidine + ATP = L-histidyl-tRNA(His) + AMP + diphosphate + H(+). This chain is Histidine--tRNA ligase, found in Anaplasma marginale (strain St. Maries).